An 805-amino-acid chain; its full sequence is MVDKLIVAVEGTAVLGPYWKIIVSDYLDKIIRCFFGVDSTSQKSSAADVEVSMVMFNTHGPYSACLVQRSGWTKDMDTFLQWLSAIPFSGGGFNDAAVAEGLAEALVMFSVPNGNQTQQKMEGKKHCILISGSNPYPLPTPVYRPQMQKLEQNENIEAQTDSRLADAETVAKTFPQCSISLSVICPKKLPKLRAIYDAGKHNPRAADPPIDTAKNPNFLVLISENFIEARAAFSRSGLTNLASNHSPVKMDVSSVLPVSGTQSISNSAANVSVISRPPISAGNIPPATVKIEPNTVTPMTGPGFSHIPSVRPALQPVPSLQASSPLSVSQEMVSHTENVQEMKPIVSGMTQSLRPVAAAAANVKILNGVAQAHQVLGGGTSIGLQSMGGTPMLSSMISSGMASSVPASQAVLSSGQSGVTTMTGAVPLAGSAQNTQNSAPSSFTSTAPSMSGQTVPAMSQGNIPGTQMMPSGTGMNQNMLTGLGATGLPSGTGTMMPTPGMSQQGQPGMQPVGVNSTSANMPLSQQQTSGALPSAQSKYVKVWEGNLSGQRQGQPVFITRLEGYRSASASESLAANWPPTMQIVRLISQDHMNNKQYVGKADFLVFRAMNQHGFLSQLQEKKLCAVIQLPSQTLLLSVSDKACRLIGMLFPGDMVVFKPQIPSQQQQQQQQQQLQAQHPQLQQQQQQQQQHLTQLQQQPLQQLQQQQQQQPLMQLQQQQQIPLQQSQVPQMQQQQIHQMQQQQQIPQMQQQQQIPQMQQQQQQQPMVGTGMNQTYMQGPARSQLMSQSQGSSQGLPITPGGGFMN.

2 disordered regions span residues 430–455 (GSAQ…GQTV) and 786–805 (SQSQ…GFMN). 2 stretches are compositionally biased toward low complexity: residues 438-451 (SAPS…PSMS) and 786-795 (SQSQGSSQGL).

The protein belongs to the Mediator complex subunit 25 family. As to quaternary structure, interacts with MYC2 (via N-terminus). MED25 competes with JAZ7 for binding to MYC2.

Its function is as follows. Component of the Mediator complex, a coactivator involved in the regulated transcription of nearly all RNA polymerase II-dependent genes. Mediator functions as a bridge to convey information from gene-specific regulatory proteins to the basal RNA polymerase II transcription machinery. Mediator is recruited to promoters by direct interactions with regulatory proteins and serves as a scaffold for the assembly of a functional pre-initiation complex with RNA polymerase II and the general transcription factors. Plays a positive role in wound-induced activation of jasmonate-responsive genes whose promoters are targeted by MYC2. The polypeptide is Mediator of RNA polymerase II transcription subunit 25 (Solanum lycopersicum (Tomato)).